A 713-amino-acid chain; its full sequence is Undecaprenyl-diphosphooligosaccharide--protein glycotransferase (713 aa).

Over 1–11 (MLKKEYLKNPY) the chain is Cytoplasmic. Residues 12 to 35 (LVLFAMIILAYVFSVLCRFYWIWW) form a helical membrane-spanning segment. The Periplasmic portion of the chain corresponds to 36–96 (ASEFNEYFFN…YWLYKITPFS (61 aa)). A DXD motif 1 motif is present at residues 52–54 (SND). Asp54 contacts Mn(2+). A helical transmembrane segment spans residues 97 to 122 (FESIILYMSTFLSSLVVIPIILLANE). At 123–125 (YKR) the chain is on the cytoplasmic side. Residues 126 to 144 (PLMGFVAALLASVANSYYN) traverse the membrane as a helical segment. Residues 145–152 (RTMSGYYD) lie on the Periplasmic side of the membrane. Residue Asp152 coordinates Mn(2+). Positions 152 to 154 (DTD) match the DXD motif 2 motif. Residues 153 to 174 (TDMLVIVLPMFILFFMVRMILK) traverse the membrane as a helical segment. The Cytoplasmic segment spans residues 175–176 (KD). A helical transmembrane segment spans residues 177–192 (FFSLIALPLFIGIYLW). Topologically, residues 193–197 (WYPSS) are periplasmic. 194 to 196 (YPS) is a binding site for [alpha-D-GalNAc-(1-&gt;4)]2-[beta-D-Glc-(1-&gt;3)]-[alpha-D-GalNAc-(1-&gt;4)]2-alpha-D-GalNAc-(1-&gt;3)-alpha-D-diNAcBac-tri-trans,hepta-cis-undecaprenyl diphosphate. Residues 198-215 (YTLNVALIGLFLIYTLIF) traverse the membrane as a helical segment. Residues 216–220 (HRKEK) lie on the Cytoplasmic side of the membrane. The helical transmembrane segment at 221 to 233 (IFYIAVILSSLTL) threads the bilayer. Topologically, residues 234–237 (SNIA) are periplasmic. Residues 238–254 (WFYQSAIIVILFALFAL) form a helical membrane-spanning segment. Topologically, residues 255–260 (EQKRLN) are cytoplasmic. The helical transmembrane segment at 261-278 (FMIIGILGSATLIFLILS) threads the bilayer. Over 279–324 (GGVDPILYQLKFYIFRNDESANLTQGFMYFNVNQTIQEVENVDFSE) the chain is Periplasmic. [alpha-D-GalNAc-(1-&gt;4)]2-[beta-D-Glc-(1-&gt;3)]-[alpha-D-GalNAc-(1-&gt;4)]2-alpha-D-GalNAc-(1-&gt;3)-alpha-D-diNAcBac-tri-trans,hepta-cis-undecaprenyl diphosphate is bound at residue Tyr291. The TIXE motif motif lies at 313 to 316 (TIQE). Glu316 contributes to the Mn(2+) binding site. Residues 325 to 347 (FMRRISGSEIVFLFSLFGFVWLL) form a helical membrane-spanning segment. Residues 348 to 352 (RKHKS) are Cytoplasmic-facing. A helical transmembrane segment spans residues 353-369 (MIMALPILVLGFLALKG). Over 370–373 (GLRF) the chain is Periplasmic. Residue Arg372 participates in [alpha-D-GalNAc-(1-&gt;4)]2-[beta-D-Glc-(1-&gt;3)]-[alpha-D-GalNAc-(1-&gt;4)]2-alpha-D-GalNAc-(1-&gt;3)-alpha-D-diNAcBac-tri-trans,hepta-cis-undecaprenyl diphosphate binding. The helical transmembrane segment at 374–396 (TIYSVPVMALGFGFLLSEFKAIL) threads the bilayer. Over 397 to 406 (VKKYSQLTSN) the chain is Cytoplasmic. The helical transmembrane segment at 407 to 427 (VCIVFATILTLAPVFIHIYNY) threads the bilayer. The Periplasmic portion of the chain corresponds to 428–713 (KAPTVFSQNE…RDAKVFKLKI (286 aa)). Positions 457-459 (WWD) are interacts with target acceptor peptide in protein substrate. Positions 457-461 (WWDYG) match the WWDYG motif motif. Tyr462 contributes to the [alpha-D-GalNAc-(1-&gt;4)]2-[beta-D-Glc-(1-&gt;3)]-[alpha-D-GalNAc-(1-&gt;4)]2-alpha-D-GalNAc-(1-&gt;3)-alpha-D-diNAcBac-tri-trans,hepta-cis-undecaprenyl diphosphate binding site. Asn534 is a glycosylation site (N-linked (DATDGlc) asparagine). An MI motif motif is present at residues 568-575 (MSLIFSTV).

The protein belongs to the STT3 family. The cofactor is Mg(2+). It depends on Mn(2+) as a cofactor.

The protein resides in the cell inner membrane. It carries out the reaction tritrans,heptacis-undecaprenyl diphosphooligosaccharide + [protein]-L-asparagine = tritrans,heptacis-undecaprenyl diphosphate + a glycoprotein with the oligosaccharide chain attached by N-beta-D-glycosyl linkage to protein L-asparagine.. It participates in protein modification; protein glycosylation. In terms of biological role, oligosaccharyltransferase that catalyzes the transfer of a preassembled heptasaccharide from a lipid donor to an asparagine residue in nascent polypeptide chains, affording a beta-linked glycan to the asparagine side chain of target proteins. Functionally, oligosaccharyl transferase (OST) that catalyzes the initial transfer of a defined glycan (GalNAc(2)GlcGalNAc(3)Bac(NAc)(2) in eubacteria, where Bac(NAc)(2) is di-N-acetyl bacillosamine) from the lipid carrier undecaprenol-pyrophosphate to an asparagine residue within an Asp/Glu-Asn-X-Ser/Thr consensus motif in nascent polypeptide chains, the first step in protein N-glycosylation. The sequence is that of Undecaprenyl-diphosphooligosaccharide--protein glycotransferase (pglB) from Campylobacter jejuni (strain RM1221).